A 130-amino-acid chain; its full sequence is Small ribosomal subunit protein uS8 (130 aa).

This sequence belongs to the universal ribosomal protein uS8 family. In terms of assembly, part of the 30S ribosomal subunit. Contacts proteins S5 and S12.

Its function is as follows. One of the primary rRNA binding proteins, it binds directly to 16S rRNA central domain where it helps coordinate assembly of the platform of the 30S subunit. This chain is Small ribosomal subunit protein uS8, found in Aliivibrio fischeri (strain ATCC 700601 / ES114) (Vibrio fischeri).